Reading from the N-terminus, the 889-residue chain is DNA gyrase subunit A (889 aa).

A Topo IIA-type catalytic domain is found at 35 to 501 (LPDVRDGLKP…GFEDLEDEDL (467 aa)). The active-site O-(5'-phospho-DNA)-tyrosine intermediate is the Tyr-123. Positions 528–534 (QNRGGRG) match the GyrA-box motif. The tract at residues 811–889 (KEDAEDETNE…IQQSSDEDEE (79 aa)) is disordered. The segment covering 813–823 (DAEDETNEDEQ) has biased composition (acidic residues). Residues 863–875 (DGRIEVRQDFMDR) are compositionally biased toward basic and acidic residues. The span at 876–889 (VEEDIQQSSDEDEE) shows a compositional bias: acidic residues.

This sequence belongs to the type II topoisomerase GyrA/ParC subunit family. As to quaternary structure, heterotetramer, composed of two GyrA and two GyrB chains. In the heterotetramer, GyrA contains the active site tyrosine that forms a transient covalent intermediate with DNA, while GyrB binds cofactors and catalyzes ATP hydrolysis.

The protein localises to the cytoplasm. The enzyme catalyses ATP-dependent breakage, passage and rejoining of double-stranded DNA.. A type II topoisomerase that negatively supercoils closed circular double-stranded (ds) DNA in an ATP-dependent manner to modulate DNA topology and maintain chromosomes in an underwound state. Negative supercoiling favors strand separation, and DNA replication, transcription, recombination and repair, all of which involve strand separation. Also able to catalyze the interconversion of other topological isomers of dsDNA rings, including catenanes and knotted rings. Type II topoisomerases break and join 2 DNA strands simultaneously in an ATP-dependent manner. The chain is DNA gyrase subunit A from Staphylococcus aureus (strain Mu50 / ATCC 700699).